We begin with the raw amino-acid sequence, 403 residues long: Tyrosine--tRNA ligase (403 aa).

Residues 42 to 51 (PTAPDLHLGH) carry the 'HIGH' region motif. Positions 226–230 (KMSKS) match the 'KMSKS' region motif. Lysine 229 contacts ATP. One can recognise an S4 RNA-binding domain in the interval 336–396 (MPISAVLNKA…GKKAFGRVTL (61 aa)).

It belongs to the class-I aminoacyl-tRNA synthetase family. TyrS type 2 subfamily. As to quaternary structure, homodimer.

The protein resides in the cytoplasm. It catalyses the reaction tRNA(Tyr) + L-tyrosine + ATP = L-tyrosyl-tRNA(Tyr) + AMP + diphosphate + H(+). Its function is as follows. Catalyzes the attachment of tyrosine to tRNA(Tyr) in a two-step reaction: tyrosine is first activated by ATP to form Tyr-AMP and then transferred to the acceptor end of tRNA(Tyr). The sequence is that of Tyrosine--tRNA ligase from Pseudomonas syringae pv. syringae (strain B728a).